The primary structure comprises 139 residues: Small ribosomal subunit protein uS12 (139 aa).

The interval 1-21 (MPTINQLVRKGRKAVQEKSTA) is disordered. A 3-methylthioaspartic acid modification is found at D102.

The protein belongs to the universal ribosomal protein uS12 family. As to quaternary structure, part of the 30S ribosomal subunit. Contacts proteins S8 and S17. May interact with IF1 in the 30S initiation complex.

With S4 and S5 plays an important role in translational accuracy. Its function is as follows. Interacts with and stabilizes bases of the 16S rRNA that are involved in tRNA selection in the A site and with the mRNA backbone. Located at the interface of the 30S and 50S subunits, it traverses the body of the 30S subunit contacting proteins on the other side and probably holding the rRNA structure together. The combined cluster of proteins S8, S12 and S17 appears to hold together the shoulder and platform of the 30S subunit. The polypeptide is Small ribosomal subunit protein uS12 (Alkaliphilus metalliredigens (strain QYMF)).